Here is a 1095-residue protein sequence, read N- to C-terminus: Voltage-gated inwardly rectifying potassium channel KCNH3 (1095 aa).

At 1 to 228 (MPAMRGLLAP…HCGALRATWD (228 aa)) the chain is on the cytoplasmic side. The region spanning 18–90 (IATRFDGTHS…QQIRKALDEH (73 aa)) is the PAS domain. The region spanning 93–145 (FKAELILYRKSGLPFWCLLDVIPIKNEKGEVALFLVSHKDISETKNRGGPDNW) is the PAC domain. A compositionally biased stretch (basic and acidic residues) spans 137–150 (KNRGGPDNWKERGG). Positions 137–161 (KNRGGPDNWKERGGGRRRYGRAGSK) are disordered. The helical transmembrane segment at 229–249 (GFILLATLYVAVTVPYSVCVS) threads the bilayer. At 250 to 259 (TAREPSAARG) the chain is on the extracellular side. The chain crosses the membrane as a helical span at residues 260–280 (PPSVCDLAVEVLFILDIVLNF). Topologically, residues 281–302 (RTTFVSKSGQVVFAPKSICLHY) are cytoplasmic. Residues 303 to 323 (VTTWFLLDVIAALPFDLLHAF) form a helical membrane-spanning segment. At 324–331 (KVNVYVGA) the chain is on the extracellular side. The helical; Voltage-sensor transmembrane segment at 332–352 (HLLKTVRLLRLLRLLPRLDRY) threads the bilayer. Topologically, residues 353 to 361 (SQYSAVVLT) are cytoplasmic. Residues 362 to 382 (LLMAVFALLAHWVACVWFYIG) traverse the membrane as a helical segment. Topologically, residues 383-464 (QQEIESSESE…GGPSLRSAYI (82 aa)) are extracellular. The segment at 417-447 (PDGGNSSGQSENCSSSSSSSGSGGGRGSEAN) is disordered. The segment covering 419–436 (GGNSSGQSENCSSSSSSS) has biased composition (low complexity). Residues N421, N428, and N447 are each glycosylated (N-linked (GlcNAc...) asparagine). Positions 465 to 485 (TSLYFALSSLTSVGFGNVSAN) form an intramembrane region, pore-forming. Positions 476–481 (SVGFGN) match the Selectivity filter motif. The Extracellular segment spans residues 486–490 (TDTEK). Residues 491 to 511 (IFSICTMLIGALMHAVVFGNV) traverse the membrane as a helical segment. Over 512-1095 (TAIIQRMYAR…QWTQEEGTGV (584 aa)) the chain is Cytoplasmic. 593 to 708 (LFEAASRGCL…FAPRFSRGLR (116 aa)) serves as a coordination point for a nucleoside 3',5'-cyclic phosphate. Disordered stretches follow at residues 740 to 823 (EEKE…LPPM), 854 to 883 (VGQS…PSEA), and 965 to 1069 (GSVL…PWDP). Over residues 784 to 796 (TAPRPRLGGRGRP) the composition is skewed to basic residues. Over residues 857-872 (SGPECSSSPSPGTESG) the composition is skewed to low complexity. Positions 974–991 (HPRPGQPPPLMAPWPWGP) are enriched in pro residues.

It belongs to the potassium channel family. H (Eag) (TC 1.A.1.20) subfamily. Kv12.2/KCNH3 sub-subfamily. In terms of assembly, the potassium channel is probably composed of a homo- or heterotetrameric complex of pore-forming alpha subunits that can associate with modulating beta subunits. Interacts with KCNE1 and KCNE3; these interactions regulate KCNH3 trafficking to the plasma membrane and its subsequent voltage-gated potassium channel activity. N-glycosylated. N-glycosylation mediates traffick to the cell membrane but is not necessary for voltage-gated potassium channel activity. In terms of tissue distribution, detected in brain, but not in other tissues.

The protein localises to the cell membrane. It catalyses the reaction K(+)(in) = K(+)(out). Its function is as follows. Pore-forming (alpha) subunit of a voltage-gated inwardly rectifying potassium channel. Charactherized by a fast rate of activation during depolarization followed by a rapid inactivation at much more depolarized value causing inward rectification due to a C-type inactivation mechanism. Exhibits a rapid recovery from inactivation. In Mus musculus (Mouse), this protein is Voltage-gated inwardly rectifying potassium channel KCNH3.